The sequence spans 92 residues: Co-chaperonin GroES (92 aa).

It belongs to the GroES chaperonin family. Heptamer of 7 subunits arranged in a ring. Interacts with the chaperonin GroEL.

It localises to the cytoplasm. In terms of biological role, together with the chaperonin GroEL, plays an essential role in assisting protein folding. The GroEL-GroES system forms a nano-cage that allows encapsulation of the non-native substrate proteins and provides a physical environment optimized to promote and accelerate protein folding. GroES binds to the apical surface of the GroEL ring, thereby capping the opening of the GroEL channel. This is Co-chaperonin GroES from Methanosarcina barkeri (strain Fusaro / DSM 804).